A 348-amino-acid chain; its full sequence is NADH-ubiquinone oxidoreductase chain 2 (348 aa).

A run of 11 helical transmembrane segments spans residues 1-21 (MMTL…MFSS), 23-43 (WFFA…MMLF), 56-76 (YFIS…WNYF), 92-112 (ITLI…HFWL), 123-143 (MGLI…IQVS), 148-168 (NMYI…FGGL), 176-196 (LLAY…AVSA), 198-218 (LSWV…TILI), 242-262 (CILV…FLKL), 272-292 (SLIL…FFYL), and 321-341 (LLFN…PFMI).

It belongs to the complex I subunit 2 family.

It is found in the mitochondrion inner membrane. The catalysed reaction is a ubiquinone + NADH + 5 H(+)(in) = a ubiquinol + NAD(+) + 4 H(+)(out). Core subunit of the mitochondrial membrane respiratory chain NADH dehydrogenase (Complex I) that is believed to belong to the minimal assembly required for catalysis. Complex I functions in the transfer of electrons from NADH to the respiratory chain. The immediate electron acceptor for the enzyme is believed to be ubiquinone. This Myxine glutinosa (Atlantic hagfish) protein is NADH-ubiquinone oxidoreductase chain 2 (MT-ND2).